Here is a 522-residue protein sequence, read N- to C-terminus: Phosphatidylinositol 3,4,5-trisphosphate 3-phosphatase TPTE2 (522 aa).

The segment covering 1-11 has biased composition (polar residues); it reads MNESPQTNEFK. Residues 1 to 28 form a disordered region; sequence MNESPQTNEFKGTTEEAPAKESPHTSEF. The segment covering 12–27 has biased composition (basic and acidic residues); the sequence is GTTEEAPAKESPHTSE. The next 3 helical transmembrane spans lie at 66–86, 111–131, and 146–166; these read IVHS…LVLL, ISLA…FVEG, and AIIV…IKLL. One can recognise a Phosphatase tensin-type domain in the interval 210 to 386; the sequence is RRYTRDGFDL…GYFAQVKHLY (177 aa). The active-site Phosphocysteine intermediate is the C320. Residues 393 to 522 form the C2 tensin-type domain; the sequence is RRILFIKRFI…FAVEILFGEK (130 aa).

Isoform 3 is expressed in testis, brain and stomach while isoform 4 seems to be testis-specific.

Its subcellular location is the endoplasmic reticulum membrane. It is found in the golgi apparatus membrane. It localises to the cytoplasm. The enzyme catalyses a 1,2-diacyl-sn-glycero-3-phospho-(1D-myo-inositol-3,4,5-trisphosphate) + H2O = a 1,2-diacyl-sn-glycero-3-phospho-(1D-myo-inositol-4,5-bisphosphate) + phosphate. Acts as a lipid phosphatase, removing the phosphate in the D3 position of the inositol ring from phosphatidylinositol 3,4,5-trisphosphate. Functionally, shows no phosphoinositide phosphatase activity. In Homo sapiens (Human), this protein is Phosphatidylinositol 3,4,5-trisphosphate 3-phosphatase TPTE2 (TPTE2).